Consider the following 171-residue polypeptide: T-cell surface glycoprotein CD3 delta chain (171 aa).

An N-terminal signal peptide occupies residues M1–P21. At F22 to A105 the chain is on the extracellular side. Cysteines 37 and 73 form a disulfide. Residues N38, N54, and N74 are each glycosylated (N-linked (GlcNAc...) asparagine). Residues G106–A126 form a helical membrane-spanning segment. Topologically, residues G127–K171 are cytoplasmic. Residues D138–N166 enclose the ITAM domain. Phosphotyrosine occurs at positions 149 and 160.

As to quaternary structure, the TCR-CD3 complex is composed of a CD3D/CD3E and a CD3G/CD3E heterodimers that preferentially associate with TCRalpha and TCRbeta, respectively, to form TCRalpha/CD3E/CD3G and TCRbeta/CD3G/CD3E trimers. In turn, the hexamer interacts with CD3Z homodimer to form the TCR-CD3 complex. Alternatively, TCRalpha and TCRbeta can be replaced by TCRgamma and TCRdelta. Interacts with coreceptors CD4 and CD8. In terms of processing, phosphorylated on Tyr residues after T-cell receptor triggering by LCK in association with CD4/CD8. As to expression, CD3D is mostly present on T-lymphocytes with its TCR-CD3 partners. Present also in fetal NK-cells.

The protein localises to the cell membrane. Its function is as follows. Part of the TCR-CD3 complex present on T-lymphocyte cell surface that plays an essential role in adaptive immune response. When antigen presenting cells (APCs) activate T-cell receptor (TCR), TCR-mediated signals are transmitted across the cell membrane by the CD3 chains CD3D, CD3E, CD3G and CD3Z. All CD3 chains contain immunoreceptor tyrosine-based activation motifs (ITAMs) in their cytoplasmic domain. Upon TCR engagement, these motifs become phosphorylated by Src family protein tyrosine kinases LCK and FYN, resulting in the activation of downstream signaling pathways. In addition of this role of signal transduction in T-cell activation, CD3D plays an essential role in thymocyte differentiation. Indeed, participates in correct intracellular TCR-CD3 complex assembly and surface expression. In absence of a functional TCR-CD3 complex, thymocytes are unable to differentiate properly. Interacts with CD4 and CD8 and thus serves to establish a functional link between the TCR and coreceptors CD4 and CD8, which is needed for activation and positive selection of CD4 or CD8 T-cells. The protein is T-cell surface glycoprotein CD3 delta chain (CD3D) of Macaca fascicularis (Crab-eating macaque).